Reading from the N-terminus, the 145-residue chain is Large ribosomal subunit protein uL15 (145 aa).

Composition is skewed to basic residues over residues 1–13 (MIRK…KQRG) and 22–33 (TKKRRGAGHRGG). The tract at residues 1-41 (MIRKTKKIRKQRGSRSVGGGCTKKRRGAGHRGGRGQAGGNK) is disordered.

This sequence belongs to the universal ribosomal protein uL15 family. As to quaternary structure, part of the 50S ribosomal subunit.

Binds to the 23S rRNA. This chain is Large ribosomal subunit protein uL15, found in Methanosphaera stadtmanae (strain ATCC 43021 / DSM 3091 / JCM 11832 / MCB-3).